Reading from the N-terminus, the 465-residue chain is MIKINHLEIRFQGEQNSPYPGNGNLSNNAFLRIRAILERLGFSQRGIHGPVVHASSQIGGRDLRPAHGRGLELWLHPAGRGSGLPHPWRPALRLRAHRQPDRAPPARASEQPLRQGRRALRRRPDQRRHRPRMTAAALRLGAARIGPGLLAGLLMAVLAKLLSQSLHAPAPLLAVVLGMMLGALGLQGQLGAGLDVFAKPGLRLGVAMMGAQISWSEFAALGGPAVLASGAVVLGGLGIGALAGAALGLPLAEALIAAAACSICGASAALAASQAAPSSPENQRTTALVIVGVNLLSTVAMLAYPPIANALGLTAHQAGVFFGLSIHDVAQVAGAGASVSPEVAGTAALAKLSRILWLGPAVVLIGLMLTRTAQGGRISGLQAPPLFVWGFAALAAARGLNLIPPALVSALGACSGFLLLAGVGAISAKLGPKALLEVKPRLAILLVTLTVAVAILAYALTRIFF.

The tract at residues 97–132 (HRQPDRAPPARASEQPLRQGRRALRRRPDQRRHRPR) is disordered. Over residues 115-132 (QGRRALRRRPDQRRHRPR) the composition is skewed to basic residues. The next 10 helical transmembrane spans lie at 135-157 (AAAL…LMAV), 172-194 (LLAV…GAGL), 219-241 (AALG…GIGA), 251-273 (LAEA…LAAS), 286-308 (TALV…PPIA), 318-340 (AGVF…ASVS), 352-374 (LSRI…RTAQ), 378-400 (ISGL…ARGL), 405-427 (PALV…GAIS), and 442-464 (LAIL…TRIF).

This sequence belongs to the UPF0324 family.

It is found in the cell membrane. In Caulobacter vibrioides (strain ATCC 19089 / CIP 103742 / CB 15) (Caulobacter crescentus), this protein is UPF0324 membrane protein CC_0425.